A 1134-amino-acid polypeptide reads, in one-letter code: Nck-associated protein 1-like (1134 aa).

The disordered stretch occupies residues 638–671 (KAKNKKSMKQRQAPRKGEPERDKPGAESHRKNRS). Over residues 639-651 (AKNKKSMKQRQAP) the composition is skewed to basic residues. A compositionally biased stretch (basic and acidic residues) spans 652-666 (RKGEPERDKPGAESH). Residues 999-1019 (LLLIFLAVSLPLLATDPSSFF) traverse the membrane as a helical segment.

As to quaternary structure, in hematopoietic cells, component of the WAVE2 complex composed of ABI1, CYFIP1/SRA1, NCKAP1L/HEM1 and WASF2/WAVE2. Interacts with ARHGAP4, PIK3C3/VPS34 and PPP1R12A/MYPT1. Interacts with mammalian target of rapamycin complex 2 (mTORC2) components, including MTOR and RICTOR. Predominantly expressed in developing and mature hematopoietic cells. Also detected in urogenital tissues, including testis.

Its subcellular location is the membrane. It localises to the cytoplasm. Its function is as follows. Essential hematopoietic-specific regulator of the actin cytoskeleton. Controls lymphocyte development, activation, proliferation and homeostasis, erythrocyte membrane stability, as well as phagocytosis and migration by neutrophils and macrophages. Component of the WAVE2 complex which signals downstream of RAC to stimulate F-actin polymerization. Required for stabilization and/or translation of the WAVE2 complex proteins in hematopoietic cells. Within the WAVE2 complex, enables the cortical actin network to restrain excessive degranulation and granule release by T-cells. Required for efficient T-lymphocyte and neutrophil migration. Exhibits complex cycles of activation and inhibition to generate waves of propagating the assembly with actin. Also involved in mechanisms WAVE independent to regulate myosin and actin polymerization during neutrophil chemotaxis. In T-cells, required for proper mechanistic target of rapamycin complex 2 (mTORC2)-dependent AKT phosphorylation, cell proliferation and cytokine secretion, including that of IL2 and TNF. This is Nck-associated protein 1-like from Mus musculus (Mouse).